A 90-amino-acid polypeptide reads, in one-letter code: Large ribosomal subunit protein bL31B (90 aa).

This sequence belongs to the bacterial ribosomal protein bL31 family. Type B subfamily. Part of the 50S ribosomal subunit.

The polypeptide is Large ribosomal subunit protein bL31B (Pseudomonas fluorescens (strain SBW25)).